The sequence spans 133 residues: Large-conductance mechanosensitive channel (133 aa).

2 consecutive transmembrane segments (helical) span residues Val14–Leu34 and Gly67–Val87.

It belongs to the MscL family. In terms of assembly, homopentamer.

It is found in the cell membrane. In terms of biological role, channel that opens in response to stretch forces in the membrane lipid bilayer. May participate in the regulation of osmotic pressure changes within the cell. This chain is Large-conductance mechanosensitive channel, found in Bacillus mycoides (strain KBAB4) (Bacillus weihenstephanensis).